The following is a 294-amino-acid chain: Acetylglutamate kinase (294 aa).

Residues 63-64 (GG), arginine 85, and asparagine 188 contribute to the substrate site.

Belongs to the acetylglutamate kinase family. ArgB subfamily.

Its subcellular location is the cytoplasm. It catalyses the reaction N-acetyl-L-glutamate + ATP = N-acetyl-L-glutamyl 5-phosphate + ADP. It participates in amino-acid biosynthesis; L-arginine biosynthesis; N(2)-acetyl-L-ornithine from L-glutamate: step 2/4. Its function is as follows. Catalyzes the ATP-dependent phosphorylation of N-acetyl-L-glutamate. This chain is Acetylglutamate kinase, found in Methanococcus maripaludis (strain C7 / ATCC BAA-1331).